A 307-amino-acid polypeptide reads, in one-letter code: MSDSTDSPAVLSAEEKRRLLRERRQAKMAKGQATDRLNNILSQGSSVKTTGVKSVLDEPQPTATSSAIHDEDPDIQDISEIASPPPPTPPIGEGSPENIDDIFQKMLQQQVQGKDGKVDPNDPIVQIMNMFKDGSGADGPQEGDVNANEFSNDPVENKYQQDLQAYDTYQQKLWKSRFLVIRVVVTLFNFFYHYLNVPSFHASNYSYVRDLAQDEFPVRNFFTWFAAFEVIIVLQYYTVFHKLGLFHAANQNSMIMKLMSMGSMVLPQLNTYQPLVARFLGYYELFGIIFGDLSLVIVLFGLLSFTK.

Residues 1–173 lie on the Cytoplasmic side of the membrane; it reads MSDSTDSPAV…QAYDTYQQKL (173 aa). The segment covering 41–52 has biased composition (polar residues); that stretch reads LSQGSSVKTTGV. The interval 41-73 is disordered; it reads LSQGSSVKTTGVKSVLDEPQPTATSSAIHDEDP. The chain crosses the membrane as a helical span at residues 174 to 194; the sequence is WKSRFLVIRVVVTLFNFFYHY. Topologically, residues 195-220 are lumenal; the sequence is LNVPSFHASNYSYVRDLAQDEFPVRN. The helical transmembrane segment at 221 to 240 threads the bilayer; the sequence is FFTWFAAFEVIIVLQYYTVF. Residues 241–284 lie on the Cytoplasmic side of the membrane; sequence HKLGLFHAANQNSMIMKLMSMGSMVLPQLNTYQPLVARFLGYYE. The helical transmembrane segment at 285–305 threads the bilayer; the sequence is LFGIIFGDLSLVIVLFGLLSF. The Lumenal portion of the chain corresponds to 306–307; the sequence is TK.

It belongs to the GET2 family. As to quaternary structure, component of the Golgi to ER traffic (GET) complex, which is composed of GET1, GET2 and GET3. Within the complex, GET1 and GET2 form a heterotetramer which is stabilized by phosphatidylinositol binding and which binds to the GET3 homodimer.

It localises to the endoplasmic reticulum membrane. It is found in the golgi apparatus membrane. Its function is as follows. Required for the post-translational delivery of tail-anchored (TA) proteins to the endoplasmic reticulum. Together with GET1, acts as a membrane receptor for soluble GET3, which recognizes and selectively binds the transmembrane domain of TA proteins in the cytosol. The GET complex cooperates with the HDEL receptor ERD2 to mediate the ATP-dependent retrieval of resident ER proteins that contain a C-terminal H-D-E-L retention signal from the Golgi to the ER. The chain is Golgi to ER traffic protein 2 from Candida tropicalis (strain ATCC MYA-3404 / T1) (Yeast).